Reading from the N-terminus, the 203-residue chain is Small ribosomal subunit protein uS7A (203 aa).

The protein belongs to the universal ribosomal protein uS7 family. As to quaternary structure, component of the small ribosomal subunit (SSU). Mature yeast ribosomes consist of a small (40S) and a large (60S) subunit. The 40S small subunit contains 1 molecule of ribosomal RNA (18S rRNA) and at least 33 different proteins. The large 60S subunit contains 3 rRNA molecules (25S, 5.8S and 5S rRNA) and at least 46 different proteins.

The protein localises to the cytoplasm. The protein resides in the nucleus. It localises to the nucleolus. Component of the ribosome, a large ribonucleoprotein complex responsible for the synthesis of proteins in the cell. The small ribosomal subunit (SSU) binds messenger RNAs (mRNAs) and translates the encoded message by selecting cognate aminoacyl-transfer RNA (tRNA) molecules. The large subunit (LSU) contains the ribosomal catalytic site termed the peptidyl transferase center (PTC), which catalyzes the formation of peptide bonds, thereby polymerizing the amino acids delivered by tRNAs into a polypeptide chain. The nascent polypeptides leave the ribosome through a tunnel in the LSU and interact with protein factors that function in enzymatic processing, targeting, and the membrane insertion of nascent chains at the exit of the ribosomal tunnel. In Schizosaccharomyces pombe (strain 972 / ATCC 24843) (Fission yeast), this protein is Small ribosomal subunit protein uS7A (rps5).